A 197-amino-acid chain; its full sequence is Phosphoheptose isomerase (197 aa).

The region spanning 34–196 (MVHCLLGGNK…DRTLFPQDEQ (163 aa)) is the SIS domain. 49-51 (NGG) is a substrate binding site. H58 and E62 together coordinate Zn(2+). Residues E62, 91-92 (ND), 117-119 (STS), S122, and Q172 contribute to the substrate site. 2 residues coordinate Zn(2+): Q172 and H180.

Belongs to the SIS family. GmhA subfamily. In terms of assembly, homotetramer. Zn(2+) is required as a cofactor.

The protein resides in the cytoplasm. It catalyses the reaction 2 D-sedoheptulose 7-phosphate = D-glycero-alpha-D-manno-heptose 7-phosphate + D-glycero-beta-D-manno-heptose 7-phosphate. It functions in the pathway carbohydrate biosynthesis; D-glycero-D-manno-heptose 7-phosphate biosynthesis; D-glycero-alpha-D-manno-heptose 7-phosphate and D-glycero-beta-D-manno-heptose 7-phosphate from sedoheptulose 7-phosphate: step 1/1. Its function is as follows. Catalyzes the isomerization of sedoheptulose 7-phosphate in D-glycero-D-manno-heptose 7-phosphate. The sequence is that of Phosphoheptose isomerase from Shewanella sp. (strain W3-18-1).